Consider the following 305-residue polypeptide: Heterogeneous nuclear ribonucleoprotein A0 (305 aa).

M1 carries the post-translational modification N-acetylmethionine. Positions C7 to E86 constitute an RRM 1 domain. A Phosphoserine modification is found at S68. A Glycyl lysine isopeptide (Lys-Gly) (interchain with G-Cter in SUMO2) cross-link involves residue K80. S84 is modified (phosphoserine; by MAPKAPK2). Glycyl lysine isopeptide (Lys-Gly) (interchain with G-Cter in SUMO2) cross-links involve residues K96, K98, K99, and K106. Residues K98–P175 enclose the RRM 2 domain. Residue K133 is modified to N6-acetyllysine. R139 carries the omega-N-methylarginine modification. Glycyl lysine isopeptide (Lys-Gly) (interchain with G-Cter in SUMO2) cross-links involve residues K154, K159, K172, and K176. Disordered regions lie at residues D178–N211 and Q265–F305. Gly residues-rich tracts occupy residues A181 to N211 and K272 to G284. At R286 the chain carries Omega-N-methylarginine. Over residues Y292–F305 the composition is skewed to gly residues. R293 bears the Asymmetric dimethylarginine; alternate mark. R293 bears the Dimethylated arginine; alternate mark. R293 carries the post-translational modification Omega-N-methylarginine; alternate.

Post-translationally, phosphorylated at Ser-84 by MAPKAPK2 in response to LPS treatment, promoting stabilization of GADD45A mRNA. Arg-293 is dimethylated, probably to asymmetric dimethylarginine.

It localises to the nucleus. MRNA-binding component of ribonucleosomes. Specifically binds AU-rich element (ARE)-containing mRNAs. Involved in post-transcriptional regulation of cytokines mRNAs. This chain is Heterogeneous nuclear ribonucleoprotein A0 (Hnrnpa0), found in Mus musculus (Mouse).